A 445-amino-acid polypeptide reads, in one-letter code: POU domain, class 3, transcription factor 2 (445 aa).

Disordered stretches follow at residues 64–173 (ALSH…WRSA) and 203–269 (LGAG…TPTS). The span at 67–90 (HGGGGGGGGGGGGGGGGGGGGGDG) shows a compositional bias: gly residues. Composition is skewed to low complexity over residues 125–151 (QQQH…QQQQ) and 163–173 (HHPGPGAWRSA). Residues 217-226 (LRDAHDEPHH) are compositionally biased toward basic and acidic residues. Residues 227–237 (ADHHPHPHSHP) show a composition bias toward basic residues. Residues 239-253 (QQPPPPPPPQGPPGH) show a composition bias toward pro residues. Residues 264-338 (EDTPTSDDLE…LLNKWLEEAD (75 aa)) form the POU-specific domain. Serine 343 carries the post-translational modification Phosphoserine. Positions 356–415 (KRKKRTSIEVSVKGALESHFLKCPKPSAQEITSLADSLQLEKEVVRVWFCNRRQKEKRMT) form a DNA-binding region, homeobox. Residues 411–445 (EKRMTPPGGTLPGAEDVYGGSRDTPPHHGVQTPVQ) form a disordered region.

The protein belongs to the POU transcription factor family. Class-3 subfamily. As to quaternary structure, interacts with PQBP1. Interaction with ISL1. Expressed specifically in the neuroectodermal cell lineage.

It localises to the nucleus. Its function is as follows. Transcription factor that plays a key role in neuronal differentiation. Binds preferentially to the recognition sequence which consists of two distinct half-sites, ('GCAT') and ('TAAT'), separated by a non-conserved spacer region of 0, 2, or 3 nucleotides. Acts as a transcriptional activator when binding cooperatively with SOX4, SOX11, or SOX12 to gene promoters. The combination of three transcription factors, ASCL1, POU3F2/BRN2 and MYT1L, is sufficient to reprogram fibroblasts and other somatic cells into induced neuronal (iN) cells in vitro. Acts downstream of ASCL1, accessing chromatin that has been opened by ASCL1, and promotes transcription of neuronal genes. In Mus musculus (Mouse), this protein is POU domain, class 3, transcription factor 2 (Pou3f2).